Reading from the N-terminus, the 241-residue chain is Deoxynucleotide monophosphate kinase (241 aa).

K10 serves as a coordination point for dGMP. Positions 11, 13, 15, and 16 each coordinate ATP. Positions 36 and 37 each coordinate dGMP. A Mg(2+)-binding site is contributed by Y42. R68 lines the dGMP pocket. Mg(2+) is bound by residues Q85 and E108. Residues R132, G139, T140, V144, W152, D175, R177, Q178, E181, and T208 each coordinate dGMP.

This sequence belongs to the dNMP kinase family. In terms of assembly, homodimer. Mg(2+) is required as a cofactor.

The enzyme catalyses dTMP + ATP = dTDP + ADP. It catalyses the reaction dGMP + ATP = dGDP + ADP. The catalysed reaction is 5-hydroxymethyl-dCMP + ATP = 5-hydroxymethyl-dCDP + ADP. With respect to regulation, inhibited by pyridoxal 5'-phosphate and diethylpyrocarbonate. Allows the synthesis of deoxyribonucleoside triphosphates necessary for the rapid viral DNA replication. Phosphorylates dGMP, dTMP and 5-hydroxymethyl-dCMP (hmdCMP) while excluding dCMP and dAMP. The phosphorylation of 5-hydroxymethyl-dCMP represents the first step in the replacement of cytosine by hydroxymethylcytosine in new viral DNA genomes. The chain is Deoxynucleotide monophosphate kinase (1) from Enterobacteria phage T4 (Bacteriophage T4).